The primary structure comprises 207 residues: Urease accessory protein UreG (207 aa).

16–23 (GPVGSGKT) contacts GTP.

It belongs to the SIMIBI class G3E GTPase family. UreG subfamily. In terms of assembly, homodimer. UreD, UreF and UreG form a complex that acts as a GTP-hydrolysis-dependent molecular chaperone, activating the urease apoprotein by helping to assemble the nickel containing metallocenter of UreC. The UreE protein probably delivers the nickel.

The protein localises to the cytoplasm. In terms of biological role, facilitates the functional incorporation of the urease nickel metallocenter. This process requires GTP hydrolysis, probably effectuated by UreG. This is Urease accessory protein UreG from Cupriavidus metallidurans (strain ATCC 43123 / DSM 2839 / NBRC 102507 / CH34) (Ralstonia metallidurans).